We begin with the raw amino-acid sequence, 64 residues long: Large ribosomal subunit protein bL28 (64 aa).

The interval 1–23 (MARKDQISHRGPLSGNNRSHALN) is disordered.

The protein belongs to the bacterial ribosomal protein bL28 family.

In Mesomycoplasma hyopneumoniae (strain 232) (Mycoplasma hyopneumoniae), this protein is Large ribosomal subunit protein bL28.